The sequence spans 223 residues: DnaJ homolog subfamily B member 9 (223 aa).

The first 23 residues, 1–23, serve as a signal peptide directing secretion; it reads MATPQSIFIFAICILMITELILA. The 65-residue stretch at 26–90 folds into the J domain; that stretch reads SYYDILGVPK…NRRKEYDTLG (65 aa). Residues 91 to 223 are divergent targeting domain; the sequence is HSAFTSGKGQ…VTTYTDCSGQ (133 aa). Ser-133 is subject to Phosphoserine.

Interacts with HSPA5/BiP; interaction is direct. Interacts with ERN1/IRE1 (via the luminal region). Interacts with DERL1. In terms of tissue distribution, widely expressed. Expressed at highest level in the liver, placenta and kidney.

Its subcellular location is the endoplasmic reticulum lumen. In terms of biological role, co-chaperone for Hsp70 protein HSPA5/BiP that acts as a key repressor of the ERN1/IRE1-mediated unfolded protein response (UPR). J domain-containing co-chaperones stimulate the ATPase activity of Hsp70 proteins and are required for efficient substrate recognition by Hsp70 proteins. In the unstressed endoplasmic reticulum, interacts with the luminal region of ERN1/IRE1 and selectively recruits HSPA5/BiP: HSPA5/BiP disrupts the dimerization of the active ERN1/IRE1 luminal region, thereby inactivating ERN1/IRE1. Also involved in endoplasmic reticulum-associated degradation (ERAD) of misfolded proteins. Required for survival of B-cell progenitors and normal antibody production. The sequence is that of DnaJ homolog subfamily B member 9 (DNAJB9) from Homo sapiens (Human).